The following is a 257-amino-acid chain: Nickel import system ATP-binding protein NikD (257 aa).

The region spanning 4 to 245 is the ABC transporter domain; the sequence is IDIQNLTIKN…HLHPYTERLI (242 aa). 37–44 contacts ATP; that stretch reads GESGAGKS.

It belongs to the ABC transporter superfamily. As to quaternary structure, the complex is composed of two ATP-binding proteins (NikD and NikE), two transmembrane proteins (NikB and NikC) and a solute-binding protein (NikA).

It localises to the cell membrane. It carries out the reaction Ni(2+)(out) + ATP + H2O = Ni(2+)(in) + ADP + phosphate + H(+). Part of the ABC transporter complex NikABCDE (Opp2) involved in nickel import. Probably responsible for energy coupling to the transport system. The chain is Nickel import system ATP-binding protein NikD from Staphylococcus aureus (strain MW2).